We begin with the raw amino-acid sequence, 317 residues long: Probable cell division protein WhiA (317 aa).

The segment at residues 267 to 300 is a DNA-binding region (H-T-H motif); it reads SLKELGEMLHPPVGKSGVNHRLRRLELIARQVRG.

The protein belongs to the WhiA family.

Its function is as follows. Involved in cell division and chromosome segregation. The polypeptide is Probable cell division protein WhiA (Moorella thermoacetica (strain ATCC 39073 / JCM 9320)).